The following is a 290-amino-acid chain: 33 kDa chaperonin (290 aa).

Intrachain disulfides connect Cys-235/Cys-237 and Cys-268/Cys-271.

Belongs to the HSP33 family. Under oxidizing conditions two disulfide bonds are formed involving the reactive cysteines. Under reducing conditions zinc is bound to the reactive cysteines and the protein is inactive.

It is found in the cytoplasm. Functionally, redox regulated molecular chaperone. Protects both thermally unfolding and oxidatively damaged proteins from irreversible aggregation. Plays an important role in the bacterial defense system toward oxidative stress. The protein is 33 kDa chaperonin of Streptococcus equi subsp. equi (strain 4047).